A 182-amino-acid polypeptide reads, in one-letter code: MGTLTVITGPSGVGKGTLVQRLLARNPSIWVSVSATTRAPREGEREGESYFFHSRERFDALVQEGGLLEWAEFAGNCYGTPRAPVEQQLQAGRPVLLEIELEGARQVRRSFSKARQIFLAPPSFEELERRIRGRGTDSEDAIQQRLLRAREELSAQGEFDAVVVNDDLDQALLKLEGLMGLG.

Positions 2-180 constitute a Guanylate kinase-like domain; it reads GTLTVITGPS…ALLKLEGLMG (179 aa). Position 9–16 (9–16) interacts with ATP; the sequence is GPSGVGKG.

The protein belongs to the guanylate kinase family.

It is found in the cytoplasm. It carries out the reaction GMP + ATP = GDP + ADP. The enzyme catalyses dZMP + ATP = dZDP + ADP. The protein operates within purine metabolism. In terms of biological role, essential for recycling GMP and indirectly, cGMP. Functionally, (Microbial infection) Catalyzes the phosphorylation of dZMP to dZDP, when the bacterium is infected by a phage that produces the substrate for the synthesis of dZTP (2- amino-2'-deoxyadenosine 5'-triphosphate), which is then used by the phage as a DNA polymerase substrate. This Parasynechococcus marenigrum (strain WH8102) protein is Guanylate kinase.